The sequence spans 706 residues: Zinc transporter foi (706 aa).

Positions 1–21 (MARHIMAVCVVCLLCAHRLHC) are cleaved as a signal peptide. Topologically, residues 22 to 261 (QDHIESLLGP…EKDKDIFYVW (240 aa)) are extracellular. The segment covering 40 to 56 (QDQLNARVYTNLSPSSE) has biased composition (polar residues). The tract at residues 40–101 (QDQLNARVYT…HGPTSESRVP (62 aa)) is disordered. Asn74, Asn119, Asn176, Asn182, Asn196, and Asn207 each carry an N-linked (GlcNAc...) asparagine glycan. Residues 262 to 282 (IYAFISVFACGILGLVGVAII) traverse the membrane as a helical segment. Residues 283-292 (PFMGSRYYKY) lie on the Cytoplasmic side of the membrane. Residues 293-313 (IIQYLVALAVGTMTGDALLHL) form a helical membrane-spanning segment. Over 314 to 329 (LPHSLAGQDERGMIMK) the chain is Extracellular. Residues 330–350 (GLGCLGGIIFFYVMEHALTMI) traverse the membrane as a helical segment. The Cytoplasmic portion of the chain corresponds to 351–604 (SEWRKSVEKK…LIKAGMSVKS (254 aa)). A phosphoserine mark is found at Ser376, Ser377, and Ser381. The helical transmembrane segment at 605–625 (AVYYNLLTGVLSFIGMIFGIA) threads the bilayer. At 626 to 631 (FGQSQD) the chain is on the extracellular side. The helical transmembrane segment at 632–652 (VAQWMFAVAAGLFIYIALVDM) threads the bilayer. At 653-665 (MPEISASHKSLGQ) the chain is on the cytoplasmic side. The chain crosses the membrane as a helical span at residues 666 to 686 (FLLQILGMLSGVGIMLLIALY). At 687–706 (EGDLMSAFGTAGAASHQHAH) the chain is on the extracellular side.

The protein belongs to the ZIP transporter (TC 2.A.5) family. Glycosylated. As to expression, maternal foi has almost completely disappeared by embryonic stage 3 except in the pole cells. In stage 6 embryos, expression is enriched in the invaginating mesoderm. In stage 9 embryos, high levels in the anterior and posterior midgut primordia. In stage 14 embryos, broad expression with low levels in the epidermis.

Its subcellular location is the cell membrane. Required for the normal migration of longitudinal and peripheral glial cells. During larval development, required for the migration of the subretinal glia into the eye disk. During embryonic development, also controls the migration of muscle cells toward their attachment sites. Required in the mesoderm for the correct morphogenesis of embryonic gonad and for tracheal branch fusion during tracheal development. Shg may be cooperating with foi to mediate a common mechanism for gonad and tracheal morphogenesis. Acts as a zinc transporter in both yeast and mammalian cells. In Drosophila melanogaster (Fruit fly), this protein is Zinc transporter foi.